The sequence spans 525 residues: GMP synthase [glutamine-hydrolyzing] (525 aa).

A Glutamine amidotransferase type-1 domain is found at 9 to 207 (RILILDFGSQ…VLEISGCEAL (199 aa)). Cysteine 86 acts as the Nucleophile in catalysis. Active-site residues include histidine 181 and glutamate 183. Residues 208–400 (WTPANIVEDA…LGLPYDMVYR (193 aa)) enclose the GMPS ATP-PPase domain. 235-241 (SGGVDSS) contacts ATP.

In terms of assembly, homodimer.

It carries out the reaction XMP + L-glutamine + ATP + H2O = GMP + L-glutamate + AMP + diphosphate + 2 H(+). Its pathway is purine metabolism; GMP biosynthesis; GMP from XMP (L-Gln route): step 1/1. In terms of biological role, catalyzes the synthesis of GMP from XMP. The chain is GMP synthase [glutamine-hydrolyzing] from Ectopseudomonas mendocina (strain ymp) (Pseudomonas mendocina).